Here is a 440-residue protein sequence, read N- to C-terminus: Thymidine phosphorylase (440 aa).

Belongs to the thymidine/pyrimidine-nucleoside phosphorylase family. Homodimer.

The catalysed reaction is thymidine + phosphate = 2-deoxy-alpha-D-ribose 1-phosphate + thymine. It functions in the pathway pyrimidine metabolism; dTMP biosynthesis via salvage pathway; dTMP from thymine: step 1/2. The enzymes which catalyze the reversible phosphorolysis of pyrimidine nucleosides are involved in the degradation of these compounds and in their utilization as carbon and energy sources, or in the rescue of pyrimidine bases for nucleotide synthesis. The sequence is that of Thymidine phosphorylase from Cronobacter sakazakii (strain ATCC BAA-894) (Enterobacter sakazakii).